A 375-amino-acid polypeptide reads, in one-letter code: Queuine tRNA-ribosyltransferase (375 aa).

The active-site Proton acceptor is the D89. Substrate-binding positions include 89–93, D143, Q187, and G214; that span reads DSGGF. An RNA binding region spans residues 245–251; it reads GVGKPED. D264 (nucleophile) is an active-site residue. Residues 269 to 273 form an RNA binding; important for wobble base 34 recognition region; sequence TRNAR. Residues C302, C304, C307, and H333 each coordinate Zn(2+).

This sequence belongs to the queuine tRNA-ribosyltransferase family. In terms of assembly, homodimer. Within each dimer, one monomer is responsible for RNA recognition and catalysis, while the other monomer binds to the replacement base PreQ1. The cofactor is Zn(2+).

It carries out the reaction 7-aminomethyl-7-carbaguanine + guanosine(34) in tRNA = 7-aminomethyl-7-carbaguanosine(34) in tRNA + guanine. It participates in tRNA modification; tRNA-queuosine biosynthesis. Functionally, catalyzes the base-exchange of a guanine (G) residue with the queuine precursor 7-aminomethyl-7-deazaguanine (PreQ1) at position 34 (anticodon wobble position) in tRNAs with GU(N) anticodons (tRNA-Asp, -Asn, -His and -Tyr). Catalysis occurs through a double-displacement mechanism. The nucleophile active site attacks the C1' of nucleotide 34 to detach the guanine base from the RNA, forming a covalent enzyme-RNA intermediate. The proton acceptor active site deprotonates the incoming PreQ1, allowing a nucleophilic attack on the C1' of the ribose to form the product. After dissociation, two additional enzymatic reactions on the tRNA convert PreQ1 to queuine (Q), resulting in the hypermodified nucleoside queuosine (7-(((4,5-cis-dihydroxy-2-cyclopenten-1-yl)amino)methyl)-7-deazaguanosine). This chain is Queuine tRNA-ribosyltransferase, found in Enterobacter sp. (strain 638).